We begin with the raw amino-acid sequence, 88 residues long: Small ribosomal subunit protein uS19 (88 aa).

Belongs to the universal ribosomal protein uS19 family.

In terms of biological role, protein S19 forms a complex with S13 that binds strongly to the 16S ribosomal RNA. This chain is Small ribosomal subunit protein uS19 (rpsS), found in Chlamydia muridarum (strain MoPn / Nigg).